Reading from the N-terminus, the 68-residue chain is DNA-directed RNA polymerase subunit omega (68 aa).

This sequence belongs to the RNA polymerase subunit omega family. In terms of assembly, the RNAP catalytic core consists of 2 alpha, 1 beta, 1 beta' and 1 omega subunit. When a sigma factor is associated with the core the holoenzyme is formed, which can initiate transcription.

It catalyses the reaction RNA(n) + a ribonucleoside 5'-triphosphate = RNA(n+1) + diphosphate. Its function is as follows. Promotes RNA polymerase assembly. Latches the N- and C-terminal regions of the beta' subunit thereby facilitating its interaction with the beta and alpha subunits. The polypeptide is DNA-directed RNA polymerase subunit omega (Neisseria gonorrhoeae (strain NCCP11945)).